A 184-amino-acid polypeptide reads, in one-letter code: ATP synthase subunit b (184 aa).

The chain crosses the membrane as a helical span at residues 19–39; that stretch reads IIVGVILVLLLTWLIAKAVVP.

The protein belongs to the ATPase B chain family. As to quaternary structure, F-type ATPases have 2 components, F(1) - the catalytic core - and F(0) - the membrane proton channel. F(1) has five subunits: alpha(3), beta(3), gamma(1), delta(1), epsilon(1). F(0) has three main subunits: a(1), b(2) and c(10-14). The alpha and beta chains form an alternating ring which encloses part of the gamma chain. F(1) is attached to F(0) by a central stalk formed by the gamma and epsilon chains, while a peripheral stalk is formed by the delta and b chains.

It localises to the cell membrane. F(1)F(0) ATP synthase produces ATP from ADP in the presence of a proton or sodium gradient. F-type ATPases consist of two structural domains, F(1) containing the extramembraneous catalytic core and F(0) containing the membrane proton channel, linked together by a central stalk and a peripheral stalk. During catalysis, ATP synthesis in the catalytic domain of F(1) is coupled via a rotary mechanism of the central stalk subunits to proton translocation. In terms of biological role, component of the F(0) channel, it forms part of the peripheral stalk, linking F(1) to F(0). This Cutibacterium acnes (strain DSM 16379 / KPA171202) (Propionibacterium acnes) protein is ATP synthase subunit b.